Consider the following 449-residue polypeptide: Cysteine--tRNA ligase (449 aa).

Residue Cys30 participates in Zn(2+) binding. Residues 32–42 (PTVYDRAHLGN) carry the 'HIGH' region motif. Zn(2+) contacts are provided by Cys210, His235, and Glu239. The short motif at 268 to 272 (KMSKS) is the 'KMSKS' region element. ATP is bound at residue Lys271.

The protein belongs to the class-I aminoacyl-tRNA synthetase family. As to quaternary structure, monomer. Requires Zn(2+) as cofactor.

The protein resides in the cytoplasm. It catalyses the reaction tRNA(Cys) + L-cysteine + ATP = L-cysteinyl-tRNA(Cys) + AMP + diphosphate. This is Cysteine--tRNA ligase from Acidiphilium cryptum (strain JF-5).